Reading from the N-terminus, the 145-residue chain is Neuropeptide-like protein 68 (145 aa).

The signal sequence occupies residues 1–15 (MLLVLLFSLFSVGFG). Positions 41 to 65 (SSSSEDDTPDFPSLRDKRGVDPMSI) are disordered.

The protein localises to the secreted. This Caenorhabditis elegans protein is Neuropeptide-like protein 68.